The following is a 71-amino-acid chain: Beta-defensin 9 (71 aa).

The N-terminal stretch at 1–23 (MRTLCSLLLICCLLFSYDTPVVG) is a signal peptide. Disulfide bonds link C37-C66, C44-C59, and C49-C67.

This sequence belongs to the beta-defensin family.

The protein resides in the secreted. Its function is as follows. Has antibacterial activity. This is Beta-defensin 9 (Defb9) from Rattus norvegicus (Rat).